Consider the following 265-residue polypeptide: Arcelin-2 (265 aa).

The first 21 residues, 1–21, serve as a signal peptide directing secretion; the sequence is MASSNLLTLALFLVLLTHANS. N-linked (GlcNAc...) asparagine glycosylation is found at asparagine 33 and asparagine 89. Cysteines 165 and 201 form a disulfide.

This sequence belongs to the leguminous lectin family.

Functionally, seed storage. This carbohydrate-binding lectin has toxic effects on bean bruchid pests. Antibiosis properties of legume lectins are proposed to be due to the lysis of epithelial cells of the intestine by binding to the carbohydrate moieties of these proteins. This chain is Arcelin-2 (ARC2), found in Phaseolus vulgaris (Kidney bean).